The sequence spans 90 residues: Small ribosomal subunit protein bS16 (90 aa).

It belongs to the bacterial ribosomal protein bS16 family.

The protein is Small ribosomal subunit protein bS16 of Anoxybacillus flavithermus (strain DSM 21510 / WK1).